A 698-amino-acid chain; its full sequence is Sucrose non-fermenting protein kinase 1 (698 aa).

Residues 1 to 48 form a disordered region; it reads MAPRGFEDEELTISLSSSHVRRPQQQQPPPPTQQQHAHQPGSRPADAP. Residues 62–313 form the Protein kinase domain; the sequence is YKVLRTLGEG…IEDIRADPWF (252 aa). Residues 68-76 and Lys91 each bind ATP; that span reads LGEGSFGKV. Asp184 acts as the Proton acceptor in catalysis. Residues 320 to 417 are auto-inhibitory domain (AID); it reads YLQLPVEEFF…ALLEPEGSSP (98 aa). The UBA domain maps to 360 to 397; it reads VTEKISKTMGYGKNDVEEALQASEPSAIKDAYMIVREN. Disordered stretches follow at residues 410–435, 482–525, and 564–597; these read LEPEGSSPMLSMSSARSATSTTTTTA, TRTD…KKTK, and ESRHAEERAEASGNGSFADSYDGSRGSTTSIDPM. Low complexity predominate over residues 415–435; the sequence is SSPMLSMSSARSATSTTTTTA. Basic and acidic residues-rich tracts occupy residues 484 to 493 and 564 to 573; these read TDAEKEETSR and ESRHAEERAE.

It belongs to the protein kinase superfamily. CAMK Ser/Thr protein kinase family. SNF1 subfamily. As to quaternary structure, component of the AMP-activated protein kinase complex also known as the SNF1 kinase complex (Snf1c), a heterotrimeric complex composed of a catalytic subunit alpha and 2 regulatory subunits beta and gamma.

It is found in the cytoplasm. Its subcellular location is the nucleus. The catalysed reaction is L-seryl-[protein] + ATP = O-phospho-L-seryl-[protein] + ADP + H(+). It catalyses the reaction L-threonyl-[protein] + ATP = O-phospho-L-threonyl-[protein] + ADP + H(+). In terms of biological role, catalytic subunit of the AMP-activated protein kinase complex also known as the SNF1 kinase complex (Snf1c), a central regulator of cellular energy homeostasis, which, in response to a fall in intracellular ATP levels, activates energy-producing pathways and inhibits energy-consuming processes. The complex phosphorylates histone H3 to form H3S10ph, which promotes H3K14ac formation, leading to transcriptional activation through TBP recruitment to the promoters. Activates the expression of the galactose oxidase (GOA) gene and of several cell wall-degrading enzymes (CWDEs) such as pectate lyase, xylanase and glucanase. Plays an important role in sudden death syndrome (SDS) by controlling the colonization of the infected roots. The polypeptide is Sucrose non-fermenting protein kinase 1 (Fusarium virguliforme).